A 194-amino-acid chain; its full sequence is Ion-translocating oxidoreductase complex subunit B (194 aa).

A hydrophobic region spans residues 1–26 (MSSILIAVIAISALALVFGLILGFAS). In terms of domain architecture, 4Fe-4S spans 32–90 (ESDPIVDQIDSILPQTQCGQCGYPGCKPYAEAIANGDTINKCPPGGQATIEKLADLMGV). Residues C49, C52, C57, C73, C114, C117, C120, C124, C144, C147, C150, and C154 each coordinate [4Fe-4S] cluster. 2 consecutive 4Fe-4S ferredoxin-type domains span residues 105–134 (KIAFIHEDMCIGCTKCIQACPVDAIVGGTK) and 135–164 (ALHTVIEAECTGCDLCVAPCPTDCIEMIPV).

The protein belongs to the 4Fe4S bacterial-type ferredoxin family. RnfB subfamily. In terms of assembly, the complex is composed of six subunits: RnfA, RnfB, RnfC, RnfD, RnfE and RnfG. It depends on [4Fe-4S] cluster as a cofactor.

Its subcellular location is the cell inner membrane. In terms of biological role, part of a membrane-bound complex that couples electron transfer with translocation of ions across the membrane. This Aliivibrio salmonicida (strain LFI1238) (Vibrio salmonicida (strain LFI1238)) protein is Ion-translocating oxidoreductase complex subunit B.